Consider the following 199-residue polypeptide: Peroxynitrite isomerase (199 aa).

The short motif at 21–27 (GEWEGRG) is the GXWXGXG element. His-190 lines the heme b pocket.

It belongs to the nitrobindin family. As to quaternary structure, homodimer. The cofactor is heme b.

It catalyses the reaction peroxynitrite = nitrate. The protein operates within nitrogen metabolism. Functionally, heme-binding protein able to scavenge peroxynitrite and to protect free L-tyrosine against peroxynitrite-mediated nitration, by acting as a peroxynitrite isomerase that converts peroxynitrite to nitrate. Therefore, this protein likely plays a role in peroxynitrite sensing and in the detoxification of reactive nitrogen and oxygen species (RNS and ROS, respectively). Is able to bind nitric oxide (NO) in vitro, but may act as a sensor of peroxynitrite levels in vivo. The sequence is that of Peroxynitrite isomerase from Paenarthrobacter aurescens (strain TC1).